Here is a 141-residue protein sequence, read N- to C-terminus: MPRHSRGKSSSSASGASQRQLRVGELIRHAMADILAQGGVHDDTLAGHIITVPEVRMSPDLKLATVYVMPLGGHDTEAVLAALAHNKKFLRGEVAHRVNLKFAPELRFRVDERFDEAERIEKLLRTPAVQRDLNSDSDDNA.

This sequence belongs to the RbfA family. In terms of assembly, monomer. Binds 30S ribosomal subunits, but not 50S ribosomal subunits or 70S ribosomes.

It localises to the cytoplasm. Its function is as follows. One of several proteins that assist in the late maturation steps of the functional core of the 30S ribosomal subunit. Associates with free 30S ribosomal subunits (but not with 30S subunits that are part of 70S ribosomes or polysomes). Required for efficient processing of 16S rRNA. May interact with the 5'-terminal helix region of 16S rRNA. This is Ribosome-binding factor A from Afipia carboxidovorans (strain ATCC 49405 / DSM 1227 / KCTC 32145 / OM5) (Oligotropha carboxidovorans).